We begin with the raw amino-acid sequence, 481 residues long: MTTFVDRVVLHLQAGDGGHGCVSVHREKFKPFGGPDGGNGGHGGSVSLVVDPQVHTLLDFHFRPHVKAANGRGGAGSNRDGANGANLVLKVPNGTVVQSGDGTVLADLVGVGTTFEVARGGRGGRGNASLANARRKAPGFAELGEPGDQIDVVLELKSVADVGLVGYPSAGKSSLISVISAAKPKIADYPFTTLVPNLGVVRVDNHTFTVADVPGLIPGAATGKGLGLEFLRHIERCAVLLHVVDTAALETERDPVADIDAIEAELVAYGGLVDRPRLVALNKVDVPDGRDLAEIVRPDLEARGFRVFEVSAATRAGLKELMYAMGELVTAARAAAPPAEPTRIVIRPKAVDDAGFTVEAAPGGTWVVRGTRPERWVRQTNFDNEEAVGYLADRLARLGVEEKLGKAGAQAGDLVRIGEREFDWQPTLYTEFVPGVRGGDQRLAEKSERPSATERLAARKARRQRPEDEAEADEPVGDGEE.

The 158-residue stretch at 2-159 (TTFVDRVVLH…IDVVLELKSV (158 aa)) folds into the Obg domain. Residues 160 to 330 (ADVGLVGYPS…LMYAMGELVT (171 aa)) form the OBG-type G domain. GTP is bound by residues 166 to 173 (GYPSAGKS), 191 to 195 (FTTLV), 212 to 215 (DVPG), 282 to 285 (NKVD), and 311 to 313 (SAA). Mg(2+) contacts are provided by serine 173 and threonine 193. Positions 348–426 (PKAVDDAGFT…IGEREFDWQP (79 aa)) constitute an OCT domain. The segment covering 439–452 (GDQRLAEKSERPSA) has biased composition (basic and acidic residues). Residues 439-481 (GDQRLAEKSERPSATERLAARKARRQRPEDEAEADEPVGDGEE) are disordered. The segment covering 468 to 481 (DEAEADEPVGDGEE) has biased composition (acidic residues).

It belongs to the TRAFAC class OBG-HflX-like GTPase superfamily. OBG GTPase family. In terms of assembly, monomer. Mg(2+) is required as a cofactor.

It localises to the cytoplasm. Functionally, an essential GTPase which binds GTP, GDP and possibly (p)ppGpp with moderate affinity, with high nucleotide exchange rates and a fairly low GTP hydrolysis rate. Plays a role in control of the cell cycle, stress response, ribosome biogenesis and in those bacteria that undergo differentiation, in morphogenesis control. The polypeptide is GTPase Obg (Salinispora tropica (strain ATCC BAA-916 / DSM 44818 / JCM 13857 / NBRC 105044 / CNB-440)).